Consider the following 329-residue polypeptide: Biotin synthase (329 aa).

Residues 48–278 form the Radical SAM core domain; that stretch reads FLGTGVDLCS…DRKIAVCGGR (231 aa). Residues C66, C70, and C73 each coordinate [4Fe-4S] cluster. [2Fe-2S] cluster contacts are provided by S143 and C203.

It belongs to the radical SAM superfamily. Biotin synthase family. In terms of assembly, homodimer. The cofactor is [4Fe-4S] cluster. It depends on [2Fe-2S] cluster as a cofactor.

The catalysed reaction is (4R,5S)-dethiobiotin + (sulfur carrier)-SH + 2 reduced [2Fe-2S]-[ferredoxin] + 2 S-adenosyl-L-methionine = (sulfur carrier)-H + biotin + 2 5'-deoxyadenosine + 2 L-methionine + 2 oxidized [2Fe-2S]-[ferredoxin]. It participates in cofactor biosynthesis; biotin biosynthesis; biotin from 7,8-diaminononanoate: step 2/2. Functionally, catalyzes the conversion of dethiobiotin (DTB) to biotin by the insertion of a sulfur atom into dethiobiotin via a radical-based mechanism. This Geobacter sulfurreducens (strain ATCC 51573 / DSM 12127 / PCA) protein is Biotin synthase.